A 157-amino-acid chain; its full sequence is Ribosomal RNA large subunit methyltransferase H (157 aa).

S-adenosyl-L-methionine contacts are provided by residues Gly106 and 125 to 130 (LSEMTF).

The protein belongs to the RNA methyltransferase RlmH family. Homodimer.

The protein resides in the cytoplasm. It carries out the reaction pseudouridine(1915) in 23S rRNA + S-adenosyl-L-methionine = N(3)-methylpseudouridine(1915) in 23S rRNA + S-adenosyl-L-homocysteine + H(+). Functionally, specifically methylates the pseudouridine at position 1915 (m3Psi1915) in 23S rRNA. This Syntrophobacter fumaroxidans (strain DSM 10017 / MPOB) protein is Ribosomal RNA large subunit methyltransferase H.